Consider the following 638-residue polypeptide: Zinc finger and BTB domain-containing protein 22 (638 aa).

The 65-residue stretch at 57–121 folds into the BTB domain; that stretch reads CDVSIRVQGR…AYTGRLSMAA (65 aa). Disordered stretches follow at residues 171–223, 229–248, 335–354, and 367–451; these read CASV…STSQ, SAAG…APVV, DDED…GEPE, and EPAD…HGAV. A compositionally biased stretch (polar residues) spans 189-210; it reads SVRSHTSSRASENQSPSSSNYF. S203 bears the Phosphoserine mark. The segment at 483–504 adopts a C2H2-type 1; atypical zinc-finger fold; sequence FLCHCGKAFSHKSMRDRHVNMH. 2 C2H2-type zinc fingers span residues 510–532 and 538–559; these read FDCP…MKTH and YECS…HRGH. The disordered stretch occupies residues 564-638; it reads HRMGVGGVGS…DFSGGGGAAH (75 aa).

Belongs to the krueppel C2H2-type zinc-finger protein family.

It localises to the nucleus. Its function is as follows. May be involved in transcriptional regulation. In Mus musculus (Mouse), this protein is Zinc finger and BTB domain-containing protein 22 (Zbtb22).